We begin with the raw amino-acid sequence, 367 residues long: Probable dual-specificity RNA methyltransferase RlmN (367 aa).

Glu-92 serves as the catalytic Proton acceptor. The region spanning 98–326 (QEYGLSVCVT…YDTLKKNGIN (229 aa)) is the Radical SAM core domain. The cysteines at positions 105 and 341 are disulfide-linked. Cys-112, Cys-116, and Cys-119 together coordinate [4Fe-4S] cluster. S-adenosyl-L-methionine contacts are provided by residues 164–165 (GE), Ser-196, 219–221 (SLH), and Asn-297. Cys-341 serves as the catalytic S-methylcysteine intermediate.

The protein belongs to the radical SAM superfamily. RlmN family. It depends on [4Fe-4S] cluster as a cofactor.

Its subcellular location is the cytoplasm. The enzyme catalyses adenosine(2503) in 23S rRNA + 2 reduced [2Fe-2S]-[ferredoxin] + 2 S-adenosyl-L-methionine = 2-methyladenosine(2503) in 23S rRNA + 5'-deoxyadenosine + L-methionine + 2 oxidized [2Fe-2S]-[ferredoxin] + S-adenosyl-L-homocysteine. The catalysed reaction is adenosine(37) in tRNA + 2 reduced [2Fe-2S]-[ferredoxin] + 2 S-adenosyl-L-methionine = 2-methyladenosine(37) in tRNA + 5'-deoxyadenosine + L-methionine + 2 oxidized [2Fe-2S]-[ferredoxin] + S-adenosyl-L-homocysteine. Its function is as follows. Specifically methylates position 2 of adenine 2503 in 23S rRNA and position 2 of adenine 37 in tRNAs. The polypeptide is Probable dual-specificity RNA methyltransferase RlmN (Listeria monocytogenes serovar 1/2a (strain ATCC BAA-679 / EGD-e)).